The chain runs to 291 residues: Verruculogen synthase (291 aa).

It belongs to the PhyH family. As to quaternary structure, homodimer. Fe cation is required as a cofactor.

It carries out the reaction fumitremorgin B + 2-oxoglutarate + AH2 + 2 O2 = verruculogen + succinate + A + CO2 + H2O. It functions in the pathway mycotoxin biosynthesis. Its function is as follows. Verruculogen synthase; part of the gene cluster that mediates the biosynthesis of fumitremorgins, indole alkaloids that carry not only intriguing chemical structures, but also interesting biological and pharmacological activities. The biosynthesis of fumitremorgin-type alkaloids begins by condensation of the two amino acids L-tryptophan and L-proline to brevianamide F, catalyzed by the non-ribosomal peptide synthetase ftmPS/ftmA. Brevianamide F is then prenylated by the prenyltransferase ftmPT1/ftmB in the presence of dimethylallyl diphosphate, resulting in the formation of tryprostatin B. The three cytochrome P450 monooxygenases, ftmP450-1/ftmC, ftmP450-2/ftmE and ftmP450-3/FtmG, are responsible for the conversion of tryprostatin B to 6-hydroxytryprostatin B, tryprostatin A to fumitremorgin C and fumitremorgin C to 12,13-dihydroxyfumitremorgin C, respectively. The putative methyltransferase ftmMT/ftmD is expected for the conversion of 6-hydroxytryprostatin B to tryprostatin A. FtmPT2/FtmH catalyzes the prenylation of 12,13-dihydroxyfumitre-morgin C in the presence of dimethylallyl diphosphate, resulting in the formation of fumitremorgin B. Fumitremorgin B is further converted to verruculogen by ftmOx1/ftmF via the insertion of an endoperoxide bond between the two prenyl moieties. Finally, verruculogen is further converted to fumitremorgin A by the verruculogen prenyltransferase ftmPT3. This Neosartorya fischeri (strain ATCC 1020 / DSM 3700 / CBS 544.65 / FGSC A1164 / JCM 1740 / NRRL 181 / WB 181) (Aspergillus fischerianus) protein is Verruculogen synthase.